The following is a 29-amino-acid chain: Snaclec multactivase regulatory subunit (29 aa).

Residues 1-29 form the C-type lectin domain; the sequence is DCLPGWSVYEGRCYKVFNQKTWKAAEKFC. Cys-2 and Cys-13 are oxidised to a cystine.

It belongs to the snaclec family. As to quaternary structure, heterodimer of a metalloproteinase subunit and a regulatory subunit comprising two homologous polypeptides disulfide-linked. In terms of tissue distribution, expressed by the venom gland.

Its subcellular location is the secreted. Its function is as follows. Multactivase, a carinactivase-like calcium-dependent prothrombin activator, activates prothrombin via recognition of the calcium ion bound conformation of its gamma-carboxyglutamic acid (GLA) domain, and the subsequent conversion of prothrombin to active thrombin is catalyzed by the catalytic subunit. This Echis multisquamatus (Central Asian sand viper) protein is Snaclec multactivase regulatory subunit.